Consider the following 339-residue polypeptide: DNA-directed RNA polymerase subunit alpha (339 aa).

Residues 1–235 form an alpha N-terminal domain (alpha-NTD) region; it reads MVIQKNWQEL…DQLQIFVNFE (235 aa). The interval 251 to 339 is alpha C-terminal domain (alpha-CTD); sequence FNPALLKKVD…DLAKRFEEHY (89 aa).

The protein belongs to the RNA polymerase alpha chain family. As to quaternary structure, homodimer. The RNAP catalytic core consists of 2 alpha, 1 beta, 1 beta' and 1 omega subunit. When a sigma factor is associated with the core the holoenzyme is formed, which can initiate transcription.

The enzyme catalyses RNA(n) + a ribonucleoside 5'-triphosphate = RNA(n+1) + diphosphate. Functionally, DNA-dependent RNA polymerase catalyzes the transcription of DNA into RNA using the four ribonucleoside triphosphates as substrates. In Methylobacterium nodulans (strain LMG 21967 / CNCM I-2342 / ORS 2060), this protein is DNA-directed RNA polymerase subunit alpha.